A 336-amino-acid polypeptide reads, in one-letter code: Probable magnesium transporter NIPA2 (336 aa).

Residues 1–7 lie on the Extracellular side of the membrane; that stretch reads MEEMSPD. Residues 8–28 traverse the membrane as a helical segment; that stretch reads NIHGVILAVSSSIFIGSSFII. At 29–55 the chain is on the cytoplasmic side; the sequence is KKKGLKKAGVSGARAGEGGYGYLYEPW. A helical transmembrane segment spans residues 56–76; it reads WWAGMITMIVGEIANFAAYAF. The Extracellular portion of the chain corresponds to 77–79; sequence APA. The chain crosses the membrane as a helical span at residues 80 to 100; that stretch reads ILVTPLGALSIIFSAVLAHFI. Over 101 to 104 the chain is Cytoplasmic; the sequence is LEEK. Residues 105–125 traverse the membrane as a helical segment; sequence LHMFGILGCVLCVVGSTTIVL. Topologically, residues 126–145 are extracellular; the sequence is HAPHEQGIESVKQVWHLATE. Residues 146–166 traverse the membrane as a helical segment; that stretch reads PGFLAYSAVVLVVVLALIFYY. Topologically, residues 167–179 are cytoplasmic; it reads EPRYGKTHMIVYV. A helical membrane pass occupies residues 180–200; it reads GICSLMGSLTVMSVKAVAIAI. The Extracellular portion of the chain corresponds to 201-212; sequence KLTFSGMNQFKY. Residues 213–233 traverse the membrane as a helical segment; it reads FHAWIFIIVVTICCILQINYL. At 234–244 the chain is on the cytoplasmic side; it reads NKALDNFNTAV. A helical transmembrane segment spans residues 245-265; the sequence is ISPVYYVMFTTFTILASMIMF. At 266–272 the chain is on the extracellular side; sequence KDWASQS. Residues 273–293 form a helical membrane-spanning segment; that stretch reads GLQIATELCGFVTILSGTFLL. At 294-336 the chain is on the cytoplasmic side; sequence HKTKDMGNSTSLRGSTSHSPRDTPVFINSGSSRSSNSTRPAIL. The segment at 303-336 is disordered; the sequence is TSLRGSTSHSPRDTPVFINSGSSRSSNSTRPAIL. A compositionally biased stretch (low complexity) spans 321-330; sequence NSGSSRSSNS.

Belongs to the NIPA (TC 2.A.7) family. Homodimer.

It localises to the cell membrane. Its subcellular location is the early endosome. Functionally, acts as a Mg(2+) transporter. Can also transport other divalent cations such as Fe(2+), Sr(2+), Ba(2+), Mn(2+) and Co(2+) but to a much less extent than Mg(2+). The protein is Probable magnesium transporter NIPA2 of Arabidopsis thaliana (Mouse-ear cress).